A 266-amino-acid polypeptide reads, in one-letter code: Putative hydro-lyase VF_1377 (266 aa).

The protein belongs to the D-glutamate cyclase family.

This Aliivibrio fischeri (strain ATCC 700601 / ES114) (Vibrio fischeri) protein is Putative hydro-lyase VF_1377.